Here is a 334-residue protein sequence, read N- to C-terminus: N-acetylmuramoyl-L-alanine amidase sle1 (334 aa).

The N-terminal stretch at 1-25 is a signal peptide; sequence MQKKVIAAIIGTSAISAVAATQANA. The LysM 1 domain maps to 27–70; sequence TTHTVKPGESVWAISNKYGISIAKLKSLNNLTSNLIFPNQVLKV. The span at 71–86 shows a compositional bias: low complexity; it reads SGSSNSTSNSSRPSTN. The interval 71–90 is disordered; sequence SGSSNSTSNSSRPSTNSGGG. The LysM 2 domain occupies 91–134; that stretch reads SYYTVQAGDSLSLIASKYGTTYQNIMRLNGLNNFFIYPGQKLKV. The interval 137 to 156 is disordered; it reads TASSSNSTSNSSRPSTNSSG. The 44-residue stretch at 158–201 folds into the LysM 3 domain; that stretch reads SYYTVQAGDSLSLIASKYGTTYQNIMRLNGLNNFFIYPGQKLKV. Residues 210–334 form the Peptidase C51 domain; the sequence is GSTTTTNRGY…YQVNNYRYIH (125 aa).

The protein resides in the secreted. Its subcellular location is the cell surface. The catalysed reaction is Hydrolyzes the link between N-acetylmuramoyl residues and L-amino acid residues in certain cell-wall glycopeptides.. In terms of biological role, peptidoglycan hydrolase involved in the splitting of the septum during cell division. In Staphylococcus aureus (strain MRSA252), this protein is N-acetylmuramoyl-L-alanine amidase sle1 (sle1).